We begin with the raw amino-acid sequence, 176 residues long: Small ribosomal subunit protein uS5 (176 aa).

Positions 18–81 (FEEKMLFVNR…SIARKNMISV (64 aa)) constitute an S5 DRBM domain.

The protein belongs to the universal ribosomal protein uS5 family. Part of the 30S ribosomal subunit. Contacts proteins S4 and S8.

With S4 and S12 plays an important role in translational accuracy. In terms of biological role, located at the back of the 30S subunit body where it stabilizes the conformation of the head with respect to the body. This is Small ribosomal subunit protein uS5 from Deinococcus deserti (strain DSM 17065 / CIP 109153 / LMG 22923 / VCD115).